Here is a 242-residue protein sequence, read N- to C-terminus: Venom nerve growth factor 2 (242 aa).

The N-terminal stretch at 1–18 (MSMLCYTLIIAFLIGIWA) is a signal peptide. Residues 19-125 (APKSEDNVPL…ALNRNIRSKR (107 aa)) constitute a propeptide that is removed on maturation. The tract at residues 46 to 69 (KALKTSRNTDQRHPAPKKAEDQEL) is disordered. A compositionally biased stretch (basic and acidic residues) spans 52-66 (RNTDQRHPAPKKAED). 3 cysteine pairs are disulfide-bonded: cysteine 139/cysteine 203, cysteine 181/cysteine 231, and cysteine 191/cysteine 233. Asparagine 147 is a glycosylation site (N-linked (GlcNAc...) asparagine).

The protein belongs to the NGF-beta family. As to quaternary structure, homodimer; non-covalently linked. In terms of tissue distribution, expressed by the venom gland.

Its subcellular location is the secreted. Its function is as follows. Nerve growth factor is important for the development and maintenance of the sympathetic and sensory nervous systems. It stimulates division and differentiation of sympathetic and embryonic sensory neurons as well as basal forebrain cholinergic neurons in the brain. Its relevance in the snake venom is not clear. However, it has been shown to inhibit metalloproteinase-dependent proteolysis of platelet glycoprotein Ib alpha, suggesting a metalloproteinase inhibition to prevent metalloprotease autodigestion and/or protection against prey proteases. Binds a lipid between the two protein chains in the homodimer. The lipid-bound form promotes histamine relase from mouse mast cells, contrary to the lipid-free form. The sequence is that of Venom nerve growth factor 2 from Demansia vestigiata (Lesser black whip snake).